Here is a 314-residue protein sequence, read N- to C-terminus: GTP-binding protein gtr2 (314 aa).

GTP-binding residues include Ser17, Ser18, Ser37, His118, and Asp121.

It belongs to the GTR/RAG GTP-binding protein family.

The protein resides in the vacuole membrane. It localises to the cytoplasm. Its subcellular location is the nucleus. It carries out the reaction GTP + H2O = GDP + phosphate + H(+). Its function is as follows. GTPase involved in activation of the TORC1 signaling pathway, which promotes growth and represses autophagy in nutrient-rich conditions. Also required for TORC1 inactivation during nitrogen starvation. The chain is GTP-binding protein gtr2 (gtr2) from Schizosaccharomyces pombe (strain 972 / ATCC 24843) (Fission yeast).